Reading from the N-terminus, the 468-residue chain is ATP synthase subunit beta (468 aa).

155–162 (GGAGVGKT) lines the ATP pocket.

It belongs to the ATPase alpha/beta chains family. In terms of assembly, F-type ATPases have 2 components, CF(1) - the catalytic core - and CF(0) - the membrane proton channel. CF(1) has five subunits: alpha(3), beta(3), gamma(1), delta(1), epsilon(1). CF(0) has three main subunits: a(1), b(2) and c(9-12). The alpha and beta chains form an alternating ring which encloses part of the gamma chain. CF(1) is attached to CF(0) by a central stalk formed by the gamma and epsilon chains, while a peripheral stalk is formed by the delta and b chains.

The protein localises to the cell membrane. It catalyses the reaction ATP + H2O + 4 H(+)(in) = ADP + phosphate + 5 H(+)(out). Its function is as follows. Produces ATP from ADP in the presence of a proton gradient across the membrane. The catalytic sites are hosted primarily by the beta subunits. The chain is ATP synthase subunit beta from Streptococcus agalactiae serotype III (strain NEM316).